The following is a 733-amino-acid chain: DNA-binding protein SATB2 (733 aa).

The interval 1–47 (MERRSESPCLRDSPDRRSGSPDVKGPPPVKVARLEQNGSPMGARGRP) is disordered. Ser-20 carries the post-translational modification Phosphoserine. Residues Lys-24 and Lys-30 each participate in a glycyl lysine isopeptide (Lys-Gly) (interchain with G-Cter in SUMO2) cross-link. The residue at position 39 (Ser-39) is a Phosphoserine. The 102-residue stretch at 57–158 (GLMIPVFCVV…VVTLKIQLQS (102 aa)) folds into the CMP domain. Lys-161 participates in a covalent cross-link: Glycyl lysine isopeptide (Lys-Gly) (interchain with G-Cter in SUMO2). One can recognise a CUTL domain in the interval 161–234 (KLEDLPAEQW…WYKKYKKIKV (74 aa)). A Glycyl lysine isopeptide (Lys-Gly) (interchain with G-Cter in SUMO) cross-link involves residue Lys-233. A Glycyl lysine isopeptide (Lys-Gly) (interchain with G-Cter in SUMO); alternate cross-link involves residue Lys-350. Residue Lys-350 forms a Glycyl lysine isopeptide (Lys-Gly) (interchain with G-Cter in SUMO2); alternate linkage. Residues 350-437 (KPEPTNSSVE…ERDRIYQDER (88 aa)) constitute a DNA-binding region (CUT 1). The segment at 435 to 473 (DERERSMNPNVSMVSSASSSPSSSRTPQAKTSTPTTDLP) is disordered. Residues 441 to 458 (MNPNVSMVSSASSSPSSS) show a composition bias toward low complexity. Ser-454 is modified (phosphoserine). Positions 459–470 (RTPQAKTSTPTT) are enriched in polar residues. Position 467 is a phosphothreonine (Thr-467). The CUT 2 DNA-binding region spans 473-560 (PIKVDGANIN…ERDVIYEEES (88 aa)). Lys-475 is covalently cross-linked (Glycyl lysine isopeptide (Lys-Gly) (interchain with G-Cter in SUMO2)). The span at 580–593 (QVLHRQQSQPAKES) shows a compositional bias: low complexity. Disordered regions lie at residues 580–617 (QVLHRQQSQPAKESSPPREEAPPPPPPTEDSCAKKPRS) and 694–733 (LLTESEENDSEEGSEEMYKVEAEEENADKSKAAPAEIDQR). Phosphoserine is present on Ser-594. Positions 615–674 (PRSRTKISLEALGILQSFIHDVGLYPDQEAIHTLSAQLDLPKHTIIKFFQNQRYHVKHHG) form a DNA-binding region, homeobox. Over residues 694–708 (LLTESEENDSEEGSE) the composition is skewed to acidic residues. The span at 709 to 733 (EMYKVEAEEENADKSKAAPAEIDQR) shows a compositional bias: basic and acidic residues. Lys-724 participates in a covalent cross-link: Glycyl lysine isopeptide (Lys-Gly) (interchain with G-Cter in SUMO2).

Belongs to the CUT homeobox family. As to quaternary structure, interacts with ATF4 and RUNX2; resulting in enhanced DNA binding and transactivation by these transcription factors. Interacts with PIAS1. In terms of processing, sumoylated by PIAS1. Sumoylation promotes nuclear localization, but represses transcription factor activity. As to expression, high expression in adult brain, moderate expression in fetal brain, and weak expression in adult liver, kidney, and spinal cord and in select brain regions, including amygdala, corpus callosum, caudate nucleus, and hippocampus.

It is found in the nucleus matrix. In terms of biological role, binds to DNA, at nuclear matrix- or scaffold-associated regions. Thought to recognize the sugar-phosphate structure of double-stranded DNA. Transcription factor controlling nuclear gene expression, by binding to matrix attachment regions (MARs) of DNA and inducing a local chromatin-loop remodeling. Acts as a docking site for several chromatin remodeling enzymes and also by recruiting corepressors (HDACs) or coactivators (HATs) directly to promoters and enhancers. Required for the initiation of the upper-layer neurons (UL1) specific genetic program and for the inactivation of deep-layer neurons (DL) and UL2 specific genes, probably by modulating BCL11B expression. Repressor of Ctip2 and regulatory determinant of corticocortical connections in the developing cerebral cortex. May play an important role in palate formation. Acts as a molecular node in a transcriptional network regulating skeletal development and osteoblast differentiation. The polypeptide is DNA-binding protein SATB2 (SATB2) (Homo sapiens (Human)).